The primary structure comprises 179 residues: NAD(P)H-quinone oxidoreductase subunit I, chloroplastic (179 aa).

4Fe-4S ferredoxin-type domains are found at residues 55 to 84 (GRIH…VDWR) and 95 to 124 (LNYS…MTEE). 8 residues coordinate [4Fe-4S] cluster: cysteine 64, cysteine 67, cysteine 70, cysteine 74, cysteine 104, cysteine 107, cysteine 110, and cysteine 114.

Belongs to the complex I 23 kDa subunit family. NDH is composed of at least 16 different subunits, 5 of which are encoded in the nucleus. [4Fe-4S] cluster serves as cofactor.

It localises to the plastid. It is found in the chloroplast thylakoid membrane. The enzyme catalyses a plastoquinone + NADH + (n+1) H(+)(in) = a plastoquinol + NAD(+) + n H(+)(out). It carries out the reaction a plastoquinone + NADPH + (n+1) H(+)(in) = a plastoquinol + NADP(+) + n H(+)(out). In terms of biological role, NDH shuttles electrons from NAD(P)H:plastoquinone, via FMN and iron-sulfur (Fe-S) centers, to quinones in the photosynthetic chain and possibly in a chloroplast respiratory chain. The immediate electron acceptor for the enzyme in this species is believed to be plastoquinone. Couples the redox reaction to proton translocation, and thus conserves the redox energy in a proton gradient. This chain is NAD(P)H-quinone oxidoreductase subunit I, chloroplastic, found in Nymphaea alba (White water-lily).